Here is a 188-residue protein sequence, read N- to C-terminus: Movement protein (188 aa).

Belongs to the tombusvirus/aureusvirus movement protein p22 family. Interacts with host protein HFI22. Post-translationally, phosphorylated.

The protein resides in the host membrane. Its function is as follows. Transports viral genome to neighboring plant cells directly through plasmosdesmata, without any budding. The movement protein allows efficient cell to cell propagation, by bypassing the host cell wall barrier. This Capsicum annuum (Capsicum pepper) protein is Movement protein.